A 994-amino-acid polypeptide reads, in one-letter code: Valine--tRNA ligase (994 aa).

Residues 43 to 53 (PNVTGTLHMGH) carry the 'HIGH' region motif. Residues 329–345 (QSGMPSGATSDTTNTPS) show a composition bias toward polar residues. A disordered region spans residues 329–355 (QSGMPSGATSDTTNTPSDPEASSAANQ). Residues 585–589 (KMSKS) carry the 'KMSKS' region motif. Lys588 contacts ATP. The interval 692-714 (AHSPAQHQAGQDGQDAPRTPQPR) is disordered. Over residues 696 to 707 (AQHQAGQDGQDA) the composition is skewed to low complexity. The stretch at 928–994 (LIDVDAERVR…NGLRERRATL (67 aa)) forms a coiled coil.

It belongs to the class-I aminoacyl-tRNA synthetase family. ValS type 1 subfamily. In terms of assembly, monomer.

The protein localises to the cytoplasm. The enzyme catalyses tRNA(Val) + L-valine + ATP = L-valyl-tRNA(Val) + AMP + diphosphate. Its function is as follows. Catalyzes the attachment of valine to tRNA(Val). As ValRS can inadvertently accommodate and process structurally similar amino acids such as threonine, to avoid such errors, it has a 'posttransfer' editing activity that hydrolyzes mischarged Thr-tRNA(Val) in a tRNA-dependent manner. This Xylella fastidiosa (strain 9a5c) protein is Valine--tRNA ligase.